The following is a 268-amino-acid chain: Thiazole synthase (268 aa).

The active-site Schiff-base intermediate with DXP is the Lys-96. 1-deoxy-D-xylulose 5-phosphate is bound by residues Gly-157, 185-186, and 207-208; these read AG and NT. Residues 238-268 form a disordered region; sequence PMRPREAASPSSPVEGVPFTPTGPRPGRGPQ. Over residues 258-268 the composition is skewed to pro residues; sequence PTGPRPGRGPQ.

The protein belongs to the ThiG family. In terms of assembly, homotetramer. Forms heterodimers with either ThiH or ThiS.

Its subcellular location is the cytoplasm. It catalyses the reaction [ThiS sulfur-carrier protein]-C-terminal-Gly-aminoethanethioate + 2-iminoacetate + 1-deoxy-D-xylulose 5-phosphate = [ThiS sulfur-carrier protein]-C-terminal Gly-Gly + 2-[(2R,5Z)-2-carboxy-4-methylthiazol-5(2H)-ylidene]ethyl phosphate + 2 H2O + H(+). It participates in cofactor biosynthesis; thiamine diphosphate biosynthesis. Functionally, catalyzes the rearrangement of 1-deoxy-D-xylulose 5-phosphate (DXP) to produce the thiazole phosphate moiety of thiamine. Sulfur is provided by the thiocarboxylate moiety of the carrier protein ThiS. In vitro, sulfur can be provided by H(2)S. This is Thiazole synthase from Thermus thermophilus (strain ATCC BAA-163 / DSM 7039 / HB27).